The sequence spans 610 residues: Elongation factor 4 (610 aa).

One can recognise a tr-type G domain in the interval 13-195 (SHIRNFSIVA…AIVHKLPAPK (183 aa)). Residues 25–30 (DHGKST) and 142–145 (NKID) contribute to the GTP site.

It belongs to the TRAFAC class translation factor GTPase superfamily. Classic translation factor GTPase family. LepA subfamily.

The protein localises to the cell inner membrane. It carries out the reaction GTP + H2O = GDP + phosphate + H(+). In terms of biological role, required for accurate and efficient protein synthesis under certain stress conditions. May act as a fidelity factor of the translation reaction, by catalyzing a one-codon backward translocation of tRNAs on improperly translocated ribosomes. Back-translocation proceeds from a post-translocation (POST) complex to a pre-translocation (PRE) complex, thus giving elongation factor G a second chance to translocate the tRNAs correctly. Binds to ribosomes in a GTP-dependent manner. This Rhizobium etli (strain ATCC 51251 / DSM 11541 / JCM 21823 / NBRC 15573 / CFN 42) protein is Elongation factor 4.